Consider the following 475-residue polypeptide: Lipoprotein lipase (475 aa).

An N-terminal signal peptide occupies residues 1 to 27 (MESKALLLLALAVWLQSLTASRGGVAA). The tract at residues 32 to 53 (RDFIDIESKFALRTPEDTAEDT) is interaction with GPIHBP1. A disulfide bridge links cysteine 54 with cysteine 67. Residue asparagine 70 is glycosylated (N-linked (GlcNAc...) asparagine). At tyrosine 121 the chain carries 3'-nitrotyrosine. Serine 159 serves as the catalytic Nucleophile. The Charge relay system role is filled by aspartate 183. 3'-nitrotyrosine is present on tyrosine 191. Ca(2+)-binding residues include alanine 194, arginine 197, serine 199, and aspartate 202. Cysteine 243 and cysteine 266 form a disulfide bridge. The essential for determining substrate specificity stretch occupies residues 243–266 (CNIGEAIRVIAERGLGDVDQLVKC). The active-site Charge relay system is the histidine 268. Intrachain disulfides connect cysteine 291-cysteine 310 and cysteine 302-cysteine 305. Residues 341–464 (FHYQVKIHFS…KGKAPAVFVK (124 aa)) enclose the PLAT domain. Tyrosine 343 carries the post-translational modification 3'-nitrotyrosine. N-linked (GlcNAc...) asparagine glycosylation is present at asparagine 386. The tract at residues 417–421 (WSDWW) is important for interaction with lipoprotein particles. The segment at 430 to 434 (KIRVK) is important for heparin binding. Residues 443 to 467 (IFCSREKVSHLQKGKAPAVFVKCHD) form an interaction with GPIHBP1 region. Residues cysteine 445 and cysteine 465 are joined by a disulfide bond.

It belongs to the AB hydrolase superfamily. Lipase family. Homodimer. Interacts with GPIHBP1 with 1:1 stoichiometry. Interacts with APOC2; the interaction activates LPL activity in the presence of lipids. Interaction with heparan sulfate proteoglycans is required to protect LPL against loss of activity. Associates with lipoprotein particles in blood plasma. Interacts with LMF1 and SEL1L; interaction with SEL1L is required to prevent aggregation of newly synthesized LPL in the endoplasmic reticulum (ER), and for normal export of LPL from the ER to the extracellular space. Interacts with SORL1; SORL1 acts as a sorting receptor, promoting LPL localization to endosomes and later to lysosomes, leading to degradation of newly synthesized LPL. Post-translationally, tyrosine nitration after lipopolysaccharide (LPS) challenge down-regulates the lipase activity. In terms of tissue distribution, highest levels in the spinal cord.

It is found in the cell membrane. It localises to the secreted. The protein resides in the extracellular space. The protein localises to the extracellular matrix. It catalyses the reaction a triacylglycerol + H2O = a diacylglycerol + a fatty acid + H(+). The catalysed reaction is a 1,2-diacyl-sn-glycero-3-phosphocholine + H2O = a 2-acyl-sn-glycero-3-phosphocholine + a fatty acid + H(+). It carries out the reaction 1,2,3-tri-(9Z-octadecenoyl)-glycerol + H2O = di-(9Z)-octadecenoylglycerol + (9Z)-octadecenoate + H(+). The enzyme catalyses 1,2-di-(9Z-octadecenoyl)-sn-glycero-3-phosphocholine + H2O = (9Z-octadecenoyl)-sn-glycero-3-phosphocholine + (9Z)-octadecenoate + H(+). It catalyses the reaction 1,2,3-tributanoylglycerol + H2O = dibutanoylglycerol + butanoate + H(+). The catalysed reaction is 1,2-dihexadecanoyl-sn-glycero-3-phosphocholine + H2O = hexadecanoyl-sn-glycero-3-phosphocholine + hexadecanoate + H(+). With respect to regulation, the apolipoprotein APOC2 acts as a coactivator of LPL activity. Ca(2+) binding promotes protein stability and formation of the active homodimer. Interaction with GPIHBP1 protects LPL against inactivation by ANGPTL4. In terms of biological role, key enzyme in triglyceride metabolism. Catalyzes the hydrolysis of triglycerides from circulating chylomicrons and very low density lipoproteins (VLDL), and thereby plays an important role in lipid clearance from the blood stream, lipid utilization and storage. Although it has both phospholipase and triglyceride lipase activities it is primarily a triglyceride lipase with low but detectable phospholipase activity. Mediates margination of triglyceride-rich lipoprotein particles in capillaries. Recruited to its site of action on the luminal surface of vascular endothelium by binding to GPIHBP1 and cell surface heparan sulfate proteoglycans. The protein is Lipoprotein lipase (LPL) of Papio anubis (Olive baboon).